The following is a 340-amino-acid chain: Tetraacyldisaccharide 4'-kinase (340 aa).

51–58 (HMGGAGKT) is a binding site for ATP.

Belongs to the LpxK family.

The catalysed reaction is a lipid A disaccharide + ATP = a lipid IVA + ADP + H(+). The protein operates within glycolipid biosynthesis; lipid IV(A) biosynthesis; lipid IV(A) from (3R)-3-hydroxytetradecanoyl-[acyl-carrier-protein] and UDP-N-acetyl-alpha-D-glucosamine: step 6/6. Its function is as follows. Transfers the gamma-phosphate of ATP to the 4'-position of a tetraacyldisaccharide 1-phosphate intermediate (termed DS-1-P) to form tetraacyldisaccharide 1,4'-bis-phosphate (lipid IVA). The polypeptide is Tetraacyldisaccharide 4'-kinase (Rhodopseudomonas palustris (strain TIE-1)).